The sequence spans 140 residues: Photosystem I reaction center subunit XI (140 aa).

A run of 3 helical transmembrane segments spans residues Leu-48–Leu-68, Leu-79–Val-99, and Ser-119–Phe-139.

This sequence belongs to the PsaL family.

The protein resides in the plastid. It is found in the chloroplast thylakoid membrane. The protein is Photosystem I reaction center subunit XI of Cyanidioschyzon merolae (strain NIES-3377 / 10D) (Unicellular red alga).